Reading from the N-terminus, the 215-residue chain is Intraflagellar transport protein 43 homolog B (215 aa).

The disordered stretch occupies residues 1–107 (MDDHLKLGDS…SDGEGDIPVI (107 aa)).

It belongs to the IFT43 family. Component of IFT complex A.

Functionally, component of IFT complex A (IFT-A) involved in retrograde ciliary transport along microtubules from the ciliary tip to the base. The protein is Intraflagellar transport protein 43 homolog B (ift43b) of Salmo salar (Atlantic salmon).